Here is a 331-residue protein sequence, read N- to C-terminus: Low affinity immunoglobulin epsilon Fc receptor (331 aa).

The Cytoplasmic portion of the chain corresponds to 1–23 (MEENEYSGYWEPPRKRCCCARRG). S-palmitoyl cysteine attachment occurs at residues cysteine 17 and cysteine 18. Residues 24-49 (TQLMLVGLLSTAMWAGLLALLLLWHW) form a helical; Signal-anchor for type II membrane protein membrane-spanning segment. The Extracellular portion of the chain corresponds to 50–331 (ETEKNLKQLG…PTRPTPKSEP (282 aa)). N-linked (GlcNAc...) asparagine glycosylation is present at asparagine 65. Repeats lie at residues 71–91 (KDLQ…VQMS), 92–112 (QNLQ…SRLS), and 113–133 (QNLT…SKLS). N-linked (GlcNAc...) asparagine glycosylation is present at asparagine 114. Disulfide bonds link cysteine 183–cysteine 311, cysteine 186–cysteine 197, cysteine 214–cysteine 305, and cysteine 282–cysteine 296. Positions 185–298 (ICPKNWLHFQ…GQWNDAFCRS (114 aa)) constitute a C-type lectin domain. The Ca(2+) site is built by glutamate 272, asparagine 292, and aspartate 293. The O-linked (Xyl...) (chondroitin sulfate) serine glycan is linked to serine 319.

Homotrimer. Interacts (via C-type lectin domain) with IGHE (via CH3 region); this interaction regulates IgE homeostasis. Interacts (via C-terminus) with CR2/CD21 (via Sushi domain 1 and 2). In terms of processing, N- and O-glycosylated.

It is found in the cell membrane. Its subcellular location is the secreted. Low-affinity receptor for immunoglobulin E (IgE) and CR2/CD21. Has essential roles in the regulation of IgE production and in the differentiation of B cells. On B cells, initiates IgE-dependent antigen uptake and presentation to T cells. On macrophages, upon IgE binding and antigen cross-linking induces intracellular killing of parasites through activation of L-Arginine-nitric oxide pathway. This chain is Low affinity immunoglobulin epsilon Fc receptor (Fcer2), found in Mus musculus (Mouse).